The following is a 497-amino-acid chain: CRISPR-associated endodeoxyribonuclease Cas12f1 (497 aa).

Residues 29-122 are recognition domain (REC); the sequence is RKDLSTMSRF…PTYKITTAPI (94 aa). The wedge domain (WED) stretch occupies residues 123–214; it reads RLQNNIYKLI…YCIIPYTFPT (92 aa). The linker stretch occupies residues 215 to 223; the sequence is HETVLDPDK. Positions 224–374 are ruvC-I; sequence VMGVDLGVAK…VAINPQYTSQ (151 aa). Catalysis depends on residues aspartate 228 and glutamate 327. Positions 375–432 are target nucleic acid-binding (TNB); sequence RCSMCGYIEKTNRSSQAVFECKQCGYGSRTICINCRHVQVSGDVCEECGGIVKKENVN. Residues cysteine 376, cysteine 379, cysteine 395, and cysteine 398 each coordinate Zn(2+). Residues 433–453 form a ruvC-II region; sequence ADYNAAKNISTPYIDQIIMEK. Residue aspartate 434 is part of the active site.

The protein belongs to the CRISPR-associated endonuclease Cas12f family. An asymmetric homodimer. Guide RNA is probably required for dimerization. Mg(2+) is required as a cofactor. The cofactor is Zn(2+).

Its function is as follows. CRISPR (clustered regularly interspaced short palindromic repeat), is an adaptive immune system that provides protection against mobile genetic elements (viruses, transposable elements and conjugative plasmids). CRISPR clusters contain sequences complementary to antecedent mobile elements and target invading nucleic acids. CRISPR clusters are transcribed and processed into CRISPR RNA (crRNA), which requires a trans-encoded small RNA (tracrRNA), but not this protein. Recognizes a short motif in the CRISPR repeat sequences (the 5' PAM or protospacer adjacent motif, TTC in this organism) to help distinguish self versus nonself, as targets within the CRISPR locus do not have PAMs. Has dsDNA endonuclease activity upon expression in E.coli of this protein, a mini CRISPR array and the probable tracrRNA. Plasmid cleavage is centered around positions 24 base pairs 3' of PAM. The mini system protects E.coli against transformation by foreign plasmids. This Syntrophomonas palmitatica (strain DSM 18709 / JCM 14374 / NBRC 102128 / MPA) protein is CRISPR-associated endodeoxyribonuclease Cas12f1.